Here is a 129-residue protein sequence, read N- to C-terminus: Intraflagellar transport protein 20 homolog (129 aa).

Residues 89-121 (VLLQMTIRELTVEKERLRVELEAVRKIEKEQDE) adopt a coiled-coil conformation.

As to quaternary structure, component of the IFT complex B composed of at least che-2, che-13, dyf-1, dyf-3, dyf-6, dyf-11, dyf-13, ift-20, ift-74, ift-81, ifta-2, osm-1, osm-5 and osm-6.

The protein resides in the cell projection. It is found in the cilium. In terms of biological role, component of the intraflagellar transport (IFT) complex B required for transport of proteins in the motile cilium. Required for ciliary entrance and transport of specific ciliary cargo proteins such as che-3 which are related to motility. This chain is Intraflagellar transport protein 20 homolog, found in Caenorhabditis elegans.